We begin with the raw amino-acid sequence, 481 residues long: MGKLRPGRVEWLASGHTERPHLFQNLLLFLWALLNCGLGVSAQGPGEWTPWVSWTRCSSSCGRGVSVRSRRCLRLPGEEPCWGDSHEYRLCQLPDCPPGAVPFRDLQCALYNGRPVLGTQKTYQWVPFHGAPNQCDLNCLAEGHAFYHSFGRVLDGTACSPGAQGVCVAGRCLSAGCDGLLGSGALEDRCGRCGGANDSCLFVQRVFRDAGAFAGYWNVTLIPEGARHIRVEHRSRNHLALMGGDGRYVLNGHWVVSPPGTYEAAGTHVVYTRDTGPQETLQAAGPTSHDLLLQVLLQEPNPGIEFEFWLPRERYSPFQARVQALGWPLRQPQPRGVEPQPPAAPAVTPAQTPTLAPDPCPPCPDTRGRAHRLLHYCGSDFVFQARVLGHHHQAQETRYEVRIQLVYKNRSPLRAREYVWAPGHCPCPMLAPHRDYLMAVQRLVSPDGTQDQLLLPHAGYARPWSPAEDSRIRLTARRCPG.

The N-terminal stretch at 1–42 is a signal peptide; sequence MGKLRPGRVEWLASGHTERPHLFQNLLLFLWALLNCGLGVSA. One can recognise a TSP type-1 domain in the interval 45–97; the sequence is PGEWTPWVSWTRCSSSCGRGVSVRSRRCLRLPGEEPCWGDSHEYRLCQLPDCP. 3 disulfides stabilise this stretch: Cys-57-Cys-91, Cys-61-Cys-96, and Cys-72-Cys-81. The N-linked (GlcNAc...) asparagine glycan is linked to Asn-218. The interval 331–361 is disordered; the sequence is QPQPRGVEPQPPAAPAVTPAQTPTLAPDPCP. The span at 345–355 shows a compositional bias: low complexity; sequence PAVTPAQTPTL. Intrachain disulfides connect Cys-360/Cys-425, Cys-363/Cys-427, and Cys-377/Cys-479. The region spanning 360–479 is the NTR domain; the sequence is CPPCPDTRGR…SRIRLTARRC (120 aa).

Interacts with heparin, FBN1 and FBN2. In terms of processing, proteolytically cleaved to release a C-terminal fragment containing the NTR domain. Contains at least one additional N-linked glycosylation site.

Its subcellular location is the secreted. It is found in the extracellular space. It localises to the extracellular matrix. Functionally, may play a role in modulation of fibrillin microfibrils in the extracellular matrix (ECM). This Homo sapiens (Human) protein is ADAMTS-like protein 5 (ADAMTSL5).